The chain runs to 235 residues: MSKNSKAYREAAEKVDKTKLYSPLEAAKLAKETSSKKQDATVEVAIRLGVDPRKADQMVRGTVNLPHGTGKTARVAVFAVGDKAEQAAAAGADIVGSDDLIEQIQGGMLDFDAAIATPDQMAKVGRIARILGPRGLMPNPKTGTVTADVAKAVSDIKGGKINFRVDKQANLHIVIGKASFDEKKLAENYGAALDEILRAKPSASKGRYLKKIVVSTTTGPGIPVDPQVTRNFAEA.

Belongs to the universal ribosomal protein uL1 family. As to quaternary structure, part of the 50S ribosomal subunit.

Its function is as follows. Binds directly to 23S rRNA. The L1 stalk is quite mobile in the ribosome, and is involved in E site tRNA release. Protein L1 is also a translational repressor protein, it controls the translation of the L11 operon by binding to its mRNA. The sequence is that of Large ribosomal subunit protein uL1 from Mycobacterium sp. (strain JLS).